Here is a 129-residue protein sequence, read N- to C-terminus: Small ribosomal subunit protein uS11 (129 aa).

This sequence belongs to the universal ribosomal protein uS11 family. Part of the 30S ribosomal subunit. Interacts with proteins S7 and S18. Binds to IF-3.

Located on the platform of the 30S subunit, it bridges several disparate RNA helices of the 16S rRNA. Forms part of the Shine-Dalgarno cleft in the 70S ribosome. This Buchnera aphidicola subsp. Baizongia pistaciae (strain Bp) protein is Small ribosomal subunit protein uS11.